We begin with the raw amino-acid sequence, 273 residues long: TIP41-like protein (273 aa).

This sequence belongs to the TIP41 family.

It is found in the cytoplasm. Its function is as follows. May be a regulator of serine/threonine-protein phosphatases 2A (PP2A) and 4 (PP4). The chain is TIP41-like protein (tiprl) from Xenopus tropicalis (Western clawed frog).